Consider the following 299-residue polypeptide: Aspartate carbamoyltransferase catalytic subunit (299 aa).

The carbamoyl phosphate site is built by Arg51 and Thr52. Residue Lys79 coordinates L-aspartate. Carbamoyl phosphate is bound by residues Arg101, His130, and Gln133. Arg163 and Arg215 together coordinate L-aspartate. The carbamoyl phosphate site is built by Gly256 and Pro257.

Belongs to the aspartate/ornithine carbamoyltransferase superfamily. ATCase family. As to quaternary structure, heterododecamer (2C3:3R2) of six catalytic PyrB chains organized as two trimers (C3), and six regulatory PyrI chains organized as three dimers (R2).

It carries out the reaction carbamoyl phosphate + L-aspartate = N-carbamoyl-L-aspartate + phosphate + H(+). It functions in the pathway pyrimidine metabolism; UMP biosynthesis via de novo pathway; (S)-dihydroorotate from bicarbonate: step 2/3. Functionally, catalyzes the condensation of carbamoyl phosphate and aspartate to form carbamoyl aspartate and inorganic phosphate, the committed step in the de novo pyrimidine nucleotide biosynthesis pathway. This Ehrlichia chaffeensis (strain ATCC CRL-10679 / Arkansas) protein is Aspartate carbamoyltransferase catalytic subunit.